We begin with the raw amino-acid sequence, 320 residues long: Cytochrome f (320 aa).

An N-terminal signal peptide occupies residues 1–35; it reads MQTRNTFFWIKEQMTRSISVSIIVYVITQTSISNA. Heme contacts are provided by Tyr36, Cys56, Cys59, and His60. Residues 286 to 306 traverse the membrane as a helical segment; it reads VQGLLFFFASVILAQIFLVLK.

It belongs to the cytochrome f family. The 4 large subunits of the cytochrome b6-f complex are cytochrome b6, subunit IV (17 kDa polypeptide, petD), cytochrome f and the Rieske protein, while the 4 small subunits are PetG, PetL, PetM and PetN. The complex functions as a dimer. It depends on heme as a cofactor.

It is found in the plastid. The protein localises to the chloroplast thylakoid membrane. Functionally, component of the cytochrome b6-f complex, which mediates electron transfer between photosystem II (PSII) and photosystem I (PSI), cyclic electron flow around PSI, and state transitions. This is Cytochrome f from Buxus microphylla (Littleleaf boxwood).